Consider the following 293-residue polypeptide: 4-diphosphocytidyl-2-C-methyl-D-erythritol kinase (293 aa).

Lys16 is an active-site residue. 99–109 (PMGAGLGGGSS) lines the ATP pocket. Asp141 is an active-site residue.

Belongs to the GHMP kinase family. IspE subfamily.

It carries out the reaction 4-CDP-2-C-methyl-D-erythritol + ATP = 4-CDP-2-C-methyl-D-erythritol 2-phosphate + ADP + H(+). It functions in the pathway isoprenoid biosynthesis; isopentenyl diphosphate biosynthesis via DXP pathway; isopentenyl diphosphate from 1-deoxy-D-xylulose 5-phosphate: step 3/6. Catalyzes the phosphorylation of the position 2 hydroxy group of 4-diphosphocytidyl-2C-methyl-D-erythritol. The chain is 4-diphosphocytidyl-2-C-methyl-D-erythritol kinase from Paraburkholderia xenovorans (strain LB400).